The primary structure comprises 449 residues: MNKMLYIKTYGCQMNVYDSNRMVDLLETQGYNIVANMADASVIILNTCHIREKASEKMYSELGRIKKLQQSRLKAGKSKAKIIVAGCVGQAEGEEIFIREPAVNIIVGPQSYYNLPTMLEKLDSGTENHLIDLDFVEAAKFNKLPEVLKSPTVSGLVSVQEGCDKFCTFCVVPYTRGAEFSRPLEQVYREVLNIAQQGAKEVVLVGQNVSAYHGKDENGKECSLADLIKYVAKIDKIKRIRYITSHPNDMTDQLLSLHATEEKLMPFLHLPVQSGSNKILKLMNRRHSRERYLEIIQQLRELRPDIVISSDIIVGFPGEDDEDFEATLSLAKEARFGQCYSFKYSQRPGTPAAVKQQISEEVKQHRLSILQAQLMQQQLECNQKLIGKVVPVLFDRDGKYDGQIIGKTPYMQSVCIMNEKDNNLYGKIVNVKILTASASSLFGEVYADS.

The region spanning 3–124 (KMLYIKTYGC…LPTMLEKLDS (122 aa)) is the MTTase N-terminal domain. [4Fe-4S] cluster contacts are provided by Cys12, Cys48, Cys87, Cys163, Cys167, and Cys170. The region spanning 149–380 (KSPTVSGLVS…QAQLMQQQLE (232 aa)) is the Radical SAM core domain. The TRAM domain occupies 383–447 (QKLIGKVVPV…ASSLFGEVYA (65 aa)).

Belongs to the methylthiotransferase family. MiaB subfamily. Monomer. [4Fe-4S] cluster is required as a cofactor.

The protein localises to the cytoplasm. The catalysed reaction is N(6)-dimethylallyladenosine(37) in tRNA + (sulfur carrier)-SH + AH2 + 2 S-adenosyl-L-methionine = 2-methylsulfanyl-N(6)-dimethylallyladenosine(37) in tRNA + (sulfur carrier)-H + 5'-deoxyadenosine + L-methionine + A + S-adenosyl-L-homocysteine + 2 H(+). In terms of biological role, catalyzes the methylthiolation of N6-(dimethylallyl)adenosine (i(6)A), leading to the formation of 2-methylthio-N6-(dimethylallyl)adenosine (ms(2)i(6)A) at position 37 in tRNAs that read codons beginning with uridine. In Orientia tsutsugamushi (strain Ikeda) (Rickettsia tsutsugamushi), this protein is tRNA-2-methylthio-N(6)-dimethylallyladenosine synthase.